The chain runs to 337 residues: UDP-N-acetylenolpyruvoylglucosamine reductase (337 aa).

An FAD-binding PCMH-type domain is found at 17–186; that stretch reads IEAKAKQFIA…TSVIYKLTKR (170 aa). Arg162 is a catalytic residue. Catalysis depends on Ser237, which acts as the Proton donor. Residue Glu333 is part of the active site.

It belongs to the MurB family. It depends on FAD as a cofactor.

It localises to the cytoplasm. It catalyses the reaction UDP-N-acetyl-alpha-D-muramate + NADP(+) = UDP-N-acetyl-3-O-(1-carboxyvinyl)-alpha-D-glucosamine + NADPH + H(+). It participates in cell wall biogenesis; peptidoglycan biosynthesis. Functionally, cell wall formation. This is UDP-N-acetylenolpyruvoylglucosamine reductase from Flavobacterium johnsoniae (strain ATCC 17061 / DSM 2064 / JCM 8514 / BCRC 14874 / CCUG 350202 / NBRC 14942 / NCIMB 11054 / UW101) (Cytophaga johnsonae).